We begin with the raw amino-acid sequence, 112 residues long: Large ribosomal subunit protein uL22 (112 aa).

This sequence belongs to the universal ribosomal protein uL22 family. Part of the 50S ribosomal subunit.

This protein binds specifically to 23S rRNA; its binding is stimulated by other ribosomal proteins, e.g. L4, L17, and L20. It is important during the early stages of 50S assembly. It makes multiple contacts with different domains of the 23S rRNA in the assembled 50S subunit and ribosome. Functionally, the globular domain of the protein is located near the polypeptide exit tunnel on the outside of the subunit, while an extended beta-hairpin is found that lines the wall of the exit tunnel in the center of the 70S ribosome. In Sulfurovum sp. (strain NBC37-1), this protein is Large ribosomal subunit protein uL22.